We begin with the raw amino-acid sequence, 251 residues long: Ubiquinone/menaquinone biosynthesis C-methyltransferase UbiE (251 aa).

Residues Thr74, Asp95, 123-124 (NA), and Ser140 contribute to the S-adenosyl-L-methionine site.

The protein belongs to the class I-like SAM-binding methyltransferase superfamily. MenG/UbiE family.

The catalysed reaction is a 2-demethylmenaquinol + S-adenosyl-L-methionine = a menaquinol + S-adenosyl-L-homocysteine + H(+). The enzyme catalyses a 2-methoxy-6-(all-trans-polyprenyl)benzene-1,4-diol + S-adenosyl-L-methionine = a 5-methoxy-2-methyl-3-(all-trans-polyprenyl)benzene-1,4-diol + S-adenosyl-L-homocysteine + H(+). The protein operates within quinol/quinone metabolism; menaquinone biosynthesis; menaquinol from 1,4-dihydroxy-2-naphthoate: step 2/2. It participates in cofactor biosynthesis; ubiquinone biosynthesis. In terms of biological role, methyltransferase required for the conversion of demethylmenaquinol (DMKH2) to menaquinol (MKH2) and the conversion of 2-polyprenyl-6-methoxy-1,4-benzoquinol (DDMQH2) to 2-polyprenyl-3-methyl-6-methoxy-1,4-benzoquinol (DMQH2). The chain is Ubiquinone/menaquinone biosynthesis C-methyltransferase UbiE from Yersinia enterocolitica serotype O:8 / biotype 1B (strain NCTC 13174 / 8081).